A 165-amino-acid polypeptide reads, in one-letter code: Free methionine-R-sulfoxide reductase (165 aa).

The GAF domain maps to 49-149 (LLEDDTLVLG…LRQLVAQLEK (101 aa)).

Belongs to the free Met sulfoxide reductase family.

It catalyses the reaction [thioredoxin]-disulfide + L-methionine + H2O = L-methionine (R)-S-oxide + [thioredoxin]-dithiol. Its function is as follows. Catalyzes the reversible oxidation-reduction of the R-enantiomer of free methionine sulfoxide to methionine. Specific for free L-methionine-(R)-S-oxide. The chain is Free methionine-R-sulfoxide reductase (msrC) from Escherichia coli (strain K12).